The sequence spans 923 residues: Mitochondrial 10-formyltetrahydrofolate dehydrogenase (923 aa).

The transit peptide at 1-19 (MLRRGSQALRRFSTGRVYF) directs the protein to the mitochondrion; not cleaved. Residues 23–331 (LKLALIGQSL…PASQYFSTGE (309 aa)) form a hydrolase domain region. S31 bears the Phosphoserine mark. Residue K60 is modified to N6-succinyllysine. (6R)-10-formyltetrahydrofolate is bound at residue 110–112 (QFI). Catalysis depends on H128, which acts as the Proton donor. D164 contributes to the (6R)-10-formyltetrahydrofolate binding site. Positions 339 to 416 (AEEVKVAETI…GFIQKVVRKL (78 aa)) constitute a Carrier domain. The residue at position 375 (S375) is an O-(pantetheine 4'-phosphoryl)serine. An aldehyde dehydrogenase domain region spans residues 438 to 923 (MVKMPYQCFI…LKTKTVTLEY (486 aa)). Residues 592–594 (IPW) and 618–621 (KPAQ) each bind NADP(+). S650 carries the phosphoserine modification. NADP(+) contacts are provided by residues 651-656 (GGIAGQ) and 671-672 (GS). N6-succinyllysine is present on K681. The active-site Proton acceptor is the E694. An NADP(+)-binding site is contributed by 694-695 (EL). C728 (proton donor) is an active-site residue. K778 serves as a coordination point for NADP(+). At K788 the chain carries N6-succinyllysine. 825–827 (ESF) contributes to the NADP(+) binding site. Position 903 is an N6-acetyllysine (K903).

In the N-terminal section; belongs to the GART family. It in the C-terminal section; belongs to the aldehyde dehydrogenase family. ALDH1L subfamily. In terms of processing, phosphopantetheinylation at Ser-375 by AASDHPPT is required for the formyltetrahydrofolate dehydrogenase activity. As to expression, highly expressed in pancreas, heart, brain and skeletal muscle.

Its subcellular location is the mitochondrion. The catalysed reaction is (6R)-10-formyltetrahydrofolate + NADP(+) + H2O = (6S)-5,6,7,8-tetrahydrofolate + CO2 + NADPH + H(+). Functionally, mitochondrial 10-formyltetrahydrofolate dehydrogenase that catalyzes the NADP(+)-dependent conversion of 10-formyltetrahydrofolate to tetrahydrofolate and carbon dioxide. This Homo sapiens (Human) protein is Mitochondrial 10-formyltetrahydrofolate dehydrogenase.